Here is a 233-residue protein sequence, read N- to C-terminus: 4'-phosphopantetheinyl transferase psf-1 (233 aa).

D110, E112, and E154 together coordinate Mg(2+). The peptidyl carrier protein binding stretch occupies residues 161-192; that stretch reads GKGISYGLSSFTARLSEDGQATLRLPDHEAPC.

Belongs to the P-Pant transferase superfamily. Gsp/Sfp/HetI/AcpT family. It depends on Mg(2+) as a cofactor.

It carries out the reaction apo-[peptidyl-carrier protein] + CoA = holo-[peptidyl-carrier protein] + adenosine 3',5'-bisphosphate + H(+). In terms of biological role, probably activates the peptidyl carrier protein (PCP) domains of surfactin synthetase by transferring the 4'-phosphopantetheinyl moiety of coenzyme A (CoA) to a serine residue. Required for the production of the lipopeptide antibiotic, surfactin. The chain is 4'-phosphopantetheinyl transferase psf-1 (psf-1) from Bacillus pumilus (Bacillus mesentericus).